The chain runs to 510 residues: Lysine--tRNA ligase (510 aa).

The Mg(2+) site is built by E420 and E427.

This sequence belongs to the class-II aminoacyl-tRNA synthetase family. Homodimer. Requires Mg(2+) as cofactor.

It localises to the cytoplasm. It catalyses the reaction tRNA(Lys) + L-lysine + ATP = L-lysyl-tRNA(Lys) + AMP + diphosphate. The chain is Lysine--tRNA ligase from Psychrobacter sp. (strain PRwf-1).